Reading from the N-terminus, the 296-residue chain is Sulfotransferase 1B1 (296 aa).

Residue 48-53 (KSGTTW) participates in 3'-phosphoadenylyl sulfate binding. 107–109 (KTH) lines the substrate pocket. Catalysis depends on His109, which acts as the Proton acceptor. Residues Arg131, Ser139, Tyr194, 228-233 (TSFEMM), and 258-260 (RKG) contribute to the 3'-phosphoadenylyl sulfate site.

It belongs to the sulfotransferase 1 family. In terms of tissue distribution, expressed highly in the colon, kidney and small intestine of male and female dogs. Highly expressed in the jejunum and ileum of the male dog than the female dog, which displayed more expression in duodenum (at protein level).

It localises to the cytoplasm. The catalysed reaction is a phenol + 3'-phosphoadenylyl sulfate = an aryl sulfate + adenosine 3',5'-bisphosphate + H(+). It catalyses the reaction 3,3',5-triiodo-L-thyronine + 3'-phosphoadenylyl sulfate = 3,3',5-triiodo-L-thyronine sulfate + adenosine 3',5'-bisphosphate + H(+). It carries out the reaction 3,3',5'-triiodo-L-thyronine + 3'-phosphoadenylyl sulfate = 3,3',5'-triiodo-L-thyronine sulfate + adenosine 3',5'-bisphosphate + H(+). The enzyme catalyses 3,3'-diiodo-L-thyronine + 3'-phosphoadenylyl sulfate = 3,3'-diiodo-L-thyronine sulfate + adenosine 3',5'-bisphosphate + H(+). The catalysed reaction is 4-ethylphenol + 3'-phosphoadenylyl sulfate = 4-ethylphenyl sulfate + adenosine 3',5'-bisphosphate + H(+). In terms of biological role, sulfotransferase that utilizes 3'-phospho-5'-adenylyl sulfate (PAPS) as sulfonate donor to catalyze the sulfate conjugation of dopamine, small phenols such as 1-naphthol and p-nitrophenol and thyroid hormones, including 3,3'-diiodothyronine, triidothyronine (T3) and reverse triiodothyronine (rT3). May play a role in gut microbiota-host metabolic interaction. O-sulfonates 4-ethylphenol (4-EP), a dietary tyrosine-derived metabolite produced by gut bacteria. The product 4-EPS crosses the blood-brain barrier and may negatively regulate oligodendrocyte maturation and myelination, affecting the functional connectivity of different brain regions associated with the limbic system. The chain is Sulfotransferase 1B1 (SULT1B1) from Canis lupus familiaris (Dog).